We begin with the raw amino-acid sequence, 282 residues long: Anamorsin homolog (282 aa).

The tract at residues 1–140 is N-terminal SAM-like domain; the sequence is MADLQGKAVL…KPVYEVGAAA (140 aa). The interval 141–192 is linker; it reads PLKLSFAKKKQSGAAAPAAQVAEVWTIATDDFDDDDLLENDGDELLDAEDLA. Residues Cys-203, Cys-214, Cys-217, and Cys-219 each contribute to the [2Fe-2S] cluster site. Residues 203-219 form a fe-S binding site A region; that stretch reads CEVGAGGKRRACKNCTC. Cys-243, Cys-246, Cys-254, and Cys-257 together coordinate [4Fe-4S] cluster. Short sequence motifs (cx2C motif) lie at residues 243-246 and 254-257; these read CGNC and CASC. A fe-S binding site B region spans residues 243 to 257; the sequence is CGNCYLGDAFRCASC.

This sequence belongs to the anamorsin family. In terms of assembly, monomer. [2Fe-2S] cluster serves as cofactor. Requires [4Fe-4S] cluster as cofactor.

It is found in the cytoplasm. Its subcellular location is the mitochondrion intermembrane space. Functionally, component of the cytosolic iron-sulfur (Fe-S) protein assembly (CIA) machinery. Required for the maturation of extramitochondrial Fe-S proteins. Part of an electron transfer chain functioning in an early step of cytosolic Fe-S biogenesis, facilitating the de novo assembly of a [4Fe-4S] cluster on the cytosolic Fe-S scaffold complex. Electrons are transferred from NADPH via a FAD- and FMN-containing diflavin oxidoreductase. Together with the diflavin oxidoreductase, also required for the assembly of the diferric tyrosyl radical cofactor of ribonucleotide reductase (RNR), probably by providing electrons for reduction during radical cofactor maturation in the catalytic small subunit. This chain is Anamorsin homolog, found in Monosiga brevicollis (Choanoflagellate).